The chain runs to 184 residues: Large ribosomal subunit protein uL22 (184 aa).

Residues Pro-160–Glu-184 are disordered. Over residues Lys-167–Glu-184 the composition is skewed to basic residues.

The protein belongs to the universal ribosomal protein uL22 family. As to quaternary structure, component of the large ribosomal subunit.

It is found in the cytoplasm. In terms of biological role, component of the large ribosomal subunit. The ribosome is a large ribonucleoprotein complex responsible for the synthesis of proteins in the cell. This Bos taurus (Bovine) protein is Large ribosomal subunit protein uL22 (RPL17).